Consider the following 112-residue polypeptide: Small ribosomal subunit protein bS6 (112 aa).

The protein belongs to the bacterial ribosomal protein bS6 family.

In terms of biological role, binds together with bS18 to 16S ribosomal RNA. The polypeptide is Small ribosomal subunit protein bS6 (Chlamydia abortus (strain DSM 27085 / S26/3) (Chlamydophila abortus)).